The chain runs to 176 residues: Isopentenyl-diphosphate Delta-isomerase (176 aa).

Residues histidine 24 and histidine 30 each coordinate Mn(2+). A Nudix hydrolase domain is found at leucine 28 to cysteine 160. Cysteine 65 is an active-site residue. Residue histidine 67 participates in Mn(2+) binding. Position 85 (glutamate 85) interacts with Mg(2+). Mn(2+)-binding residues include glutamate 110 and glutamate 112. Residue glutamate 112 is part of the active site.

The protein belongs to the IPP isomerase type 1 family. It depends on Mg(2+) as a cofactor. The cofactor is Mn(2+).

Its subcellular location is the cytoplasm. It catalyses the reaction isopentenyl diphosphate = dimethylallyl diphosphate. The protein operates within isoprenoid biosynthesis; dimethylallyl diphosphate biosynthesis; dimethylallyl diphosphate from isopentenyl diphosphate: step 1/1. Its function is as follows. Catalyzes the 1,3-allylic rearrangement of the homoallylic substrate isopentenyl (IPP) to its highly electrophilic allylic isomer, dimethylallyl diphosphate (DMAPP). The polypeptide is Isopentenyl-diphosphate Delta-isomerase (Burkholderia multivorans (strain ATCC 17616 / 249)).